We begin with the raw amino-acid sequence, 390 residues long: Phosphopentomutase (390 aa).

Mn(2+)-binding residues include aspartate 10, aspartate 284, histidine 289, aspartate 325, histidine 326, and histidine 337.

Belongs to the phosphopentomutase family. It depends on Mn(2+) as a cofactor.

It is found in the cytoplasm. The enzyme catalyses 2-deoxy-alpha-D-ribose 1-phosphate = 2-deoxy-D-ribose 5-phosphate. It catalyses the reaction alpha-D-ribose 1-phosphate = D-ribose 5-phosphate. Its pathway is carbohydrate degradation; 2-deoxy-D-ribose 1-phosphate degradation; D-glyceraldehyde 3-phosphate and acetaldehyde from 2-deoxy-alpha-D-ribose 1-phosphate: step 1/2. Functionally, isomerase that catalyzes the conversion of deoxy-ribose 1-phosphate (dRib-1-P) and ribose 1-phosphate (Rib-1-P) to deoxy-ribose 5-phosphate (dRib-5-P) and ribose 5-phosphate (Rib-5-P), respectively. The sequence is that of Phosphopentomutase from Clostridioides difficile (strain 630) (Peptoclostridium difficile).